A 943-amino-acid chain; its full sequence is Isoleucine--tRNA ligase (943 aa).

Positions 58 to 68 (PYANGSIHIGH) match the 'HIGH' region motif. Position 567 (Glu567) interacts with L-isoleucyl-5'-AMP. Positions 608–612 (KMSKS) match the 'KMSKS' region motif. Lys611 contacts ATP. Residues Cys906, Cys909, Cys926, and Cys929 each contribute to the Zn(2+) site.

Belongs to the class-I aminoacyl-tRNA synthetase family. IleS type 1 subfamily. As to quaternary structure, monomer. The cofactor is Zn(2+).

It localises to the cytoplasm. The enzyme catalyses tRNA(Ile) + L-isoleucine + ATP = L-isoleucyl-tRNA(Ile) + AMP + diphosphate. In terms of biological role, catalyzes the attachment of isoleucine to tRNA(Ile). As IleRS can inadvertently accommodate and process structurally similar amino acids such as valine, to avoid such errors it has two additional distinct tRNA(Ile)-dependent editing activities. One activity is designated as 'pretransfer' editing and involves the hydrolysis of activated Val-AMP. The other activity is designated 'posttransfer' editing and involves deacylation of mischarged Val-tRNA(Ile). The polypeptide is Isoleucine--tRNA ligase (Pseudomonas aeruginosa (strain LESB58)).